The chain runs to 685 residues: Glycine--tRNA ligase beta subunit (685 aa).

The tract at residues 58–77 is disordered; it reads GLTAQSPTTREERKGPRTDA. Residues 66–77 show a composition bias toward basic and acidic residues; it reads TREERKGPRTDA.

This sequence belongs to the class-II aminoacyl-tRNA synthetase family. Tetramer of two alpha and two beta subunits.

Its subcellular location is the cytoplasm. It carries out the reaction tRNA(Gly) + glycine + ATP = glycyl-tRNA(Gly) + AMP + diphosphate. The sequence is that of Glycine--tRNA ligase beta subunit from Paracoccus denitrificans (strain Pd 1222).